Reading from the N-terminus, the 379-residue chain is MMFNFAQPVYPLVLTAAKNNPENAHQQLLKTLHRLDENRHTVWGKWILENLDHSFTFEDSRLQQNLWGLTFKTPVGLAAGCDKDGLAAGIWDHFGFGFAEIGAVTLHAQPGNPKPRLFRLPQDKAALNRLGANNQGAQKVAQTLKETWQRQPRQIPIGINLCKSKITPLEQAAMDYVGSFRYLEEDADYFVVNVSSPNTPGLRSLQEGEQLNVILQELQSVNSLTKPILVKISPDLSWESIKLIIKLAKTYQLAGIIATNTTIKREGLKTNILEKTGNSIQEEAGGISGQPIRQRSTEVIRFIYEQTQGTLPIIGVGGIFTAEDAWEKITSGASLLQLYTGWIYQGPWCISNINRGLVRKLEKYKLSHISEAVGMDFNS.

Residues 79-83 (AGCDK) and A103 contribute to the FMN site. Residue K83 participates in substrate binding. Position 128 to 131 (128 to 131 (NRLG)) interacts with substrate. The FMN site is built by N160 and N193. N193 is a substrate binding site. The active-site Nucleophile is S196. Residue N198 coordinates substrate. The FMN site is built by K231 and T259. A substrate-binding site is contributed by 260–261 (NT). Residues G289, G318, and 339–340 (YT) each bind FMN.

Belongs to the dihydroorotate dehydrogenase family. Type 2 subfamily. As to quaternary structure, monomer. FMN serves as cofactor.

It is found in the cell membrane. The catalysed reaction is (S)-dihydroorotate + a quinone = orotate + a quinol. It participates in pyrimidine metabolism; UMP biosynthesis via de novo pathway; orotate from (S)-dihydroorotate (quinone route): step 1/1. Its function is as follows. Catalyzes the conversion of dihydroorotate to orotate with quinone as electron acceptor. The protein is Dihydroorotate dehydrogenase (quinone) of Crocosphaera subtropica (strain ATCC 51142 / BH68) (Cyanothece sp. (strain ATCC 51142)).